Here is a 542-residue protein sequence, read N- to C-terminus: CTP synthase (542 aa).

An amidoligase domain region spans residues 1–265 (MARYIFITGG…DQEVLAAFGI (265 aa)). Serine 13 contributes to the CTP binding site. Serine 13 lines the UTP pocket. Position 14–19 (14–19 (SLGKGL)) interacts with ATP. Tyrosine 54 serves as a coordination point for L-glutamine. Aspartate 71 is a binding site for ATP. Residues aspartate 71 and glutamate 139 each contribute to the Mg(2+) site. CTP is bound by residues 146–148 (DIE), 186–191 (KTKPTQ), and lysine 222. UTP is bound by residues 186-191 (KTKPTQ) and lysine 222. ATP is bound at residue 238-240 (RDV). The Glutamine amidotransferase type-1 domain occupies 291-541 (TIAIVGKYTG…IAAALEQSRL (251 aa)). Glycine 353 contacts L-glutamine. Cysteine 380 serves as the catalytic Nucleophile; for glutamine hydrolysis. Residues 381–384 (FGMQ), glutamate 404, and arginine 469 contribute to the L-glutamine site. Active-site residues include histidine 514 and glutamate 516.

This sequence belongs to the CTP synthase family. Homotetramer.

The catalysed reaction is UTP + L-glutamine + ATP + H2O = CTP + L-glutamate + ADP + phosphate + 2 H(+). The enzyme catalyses L-glutamine + H2O = L-glutamate + NH4(+). It catalyses the reaction UTP + NH4(+) + ATP = CTP + ADP + phosphate + 2 H(+). Its pathway is pyrimidine metabolism; CTP biosynthesis via de novo pathway; CTP from UDP: step 2/2. Its activity is regulated as follows. Allosterically activated by GTP, when glutamine is the substrate; GTP has no effect on the reaction when ammonia is the substrate. The allosteric effector GTP functions by stabilizing the protein conformation that binds the tetrahedral intermediate(s) formed during glutamine hydrolysis. Inhibited by the product CTP, via allosteric rather than competitive inhibition. Functionally, catalyzes the ATP-dependent amination of UTP to CTP with either L-glutamine or ammonia as the source of nitrogen. Regulates intracellular CTP levels through interactions with the four ribonucleotide triphosphates. The sequence is that of CTP synthase from Methylocella silvestris (strain DSM 15510 / CIP 108128 / LMG 27833 / NCIMB 13906 / BL2).